The sequence spans 212 residues: 2,3-bisphosphoglycerate-dependent phosphoglycerate mutase (212 aa).

Residues arginine 9–asparagine 16, threonine 22–glycine 23, arginine 61, glutamate 88–tyrosine 91, lysine 99, arginine 115–arginine 116, and glycine 159–asparagine 160 contribute to the substrate site. Histidine 10 acts as the Tele-phosphohistidine intermediate in catalysis. Residue glutamate 88 is the Proton donor/acceptor of the active site.

This sequence belongs to the phosphoglycerate mutase family. BPG-dependent PGAM subfamily. In terms of assembly, homodimer.

It catalyses the reaction (2R)-2-phosphoglycerate = (2R)-3-phosphoglycerate. It functions in the pathway carbohydrate degradation; glycolysis; pyruvate from D-glyceraldehyde 3-phosphate: step 3/5. Its function is as follows. Catalyzes the interconversion of 2-phosphoglycerate and 3-phosphoglycerate. This is 2,3-bisphosphoglycerate-dependent phosphoglycerate mutase from Methylobacterium radiotolerans (strain ATCC 27329 / DSM 1819 / JCM 2831 / NBRC 15690 / NCIMB 10815 / 0-1).